Reading from the N-terminus, the 342-residue chain is uncharacterized protein (342 aa).

Belongs to the cycloisomerase 2 family.

This is an uncharacterized protein from Staphylococcus aureus (strain N315).